We begin with the raw amino-acid sequence, 202 residues long: Peptide methionine sulfoxide reductase B1, chloroplastic (202 aa).

Residues 1–63 (MASSTRLTII…SSSPKPDNVQ (63 aa)) constitute a chloroplast transit peptide. The interval 48–67 (YSMGSSSSSPKPDNVQEAEK) is disordered. In terms of domain architecture, MsrB spans 75-197 (ENEWKKRLTP…NSAALKLNAL (123 aa)). Zn(2+) is bound by residues Cys-114, Cys-117, Cys-163, and Cys-166. Cys-186 serves as the catalytic Nucleophile.

This sequence belongs to the MsrB Met sulfoxide reductase family. The cofactor is Zn(2+). Expressed at low levels in stems, leaves, floral buds, flowers and siliques (at protein level).

It localises to the plastid. It is found in the chloroplast. The enzyme catalyses L-methionyl-[protein] + [thioredoxin]-disulfide + H2O = L-methionyl-(R)-S-oxide-[protein] + [thioredoxin]-dithiol. Its function is as follows. Catalyzes the reduction of methionine sulfoxide (MetSO) to methionine in proteins. Specifically reduces the MetSO R-enantiomer. Plays a protective role against oxidative stress by restoring activity to proteins that have been inactivated by methionine oxidation. May play an essential function in association with MSRB2 in maintaining vegetative growth during environmental constraints, through the preservation of photosynthetic antennae. MSRB1 and MSRB2 account for most of the leaf peptide MSR capacity. The sequence is that of Peptide methionine sulfoxide reductase B1, chloroplastic from Arabidopsis thaliana (Mouse-ear cress).